The chain runs to 587 residues: Putative gustatory receptor 59b (587 aa).

Residues 1 to 4 (MPSY) lie on the Cytoplasmic side of the membrane. Residues 5 to 25 (MAFTPYIMFSTNYAAIAYILI) form a helical membrane-spanning segment. Residues 26-62 (SRCYRDSMLLDLQRITLEVNREMLRTGKKMNSLIRRM) lie on the Extracellular side of the membrane. A helical transmembrane segment spans residues 63–83 (FFLKTFTLTYSCLSYILAVLV). Residues 84–97 (YQWRAQNWSNLFNG) lie on the Cytoplasmic side of the membrane. A helical membrane pass occupies residues 98-118 (LLVNISLTILVVTTFFYFVSL). At 119 to 277 (MHVARGFDFV…CGLYPVNKAK (159 aa)) the chain is on the extracellular side. N-linked (GlcNAc...) asparagine glycosylation occurs at Asn-159. A helical membrane pass occupies residues 278 to 298 (WLEMVASIVVHSIMLFQFHLV). Residues 299 to 309 (MRGGYTTLFSR) lie on the Cytoplasmic side of the membrane. The chain crosses the membrane as a helical span at residues 310 to 330 (TYALLANIITLTMLPIVMWQV). Residues 331 to 403 (RSVFLAKRHY…GIDGVRRSLR (73 aa)) are Extracellular-facing. The helical transmembrane segment at 404 to 424 (ILLFVKFFTLSWLCITDIIFL) threads the bilayer. Residues 425-518 (FYSSDAVIWV…IYAPQMLATR (94 aa)) lie on the Cytoplasmic side of the membrane. A helical membrane pass occupies residues 519–539 (FDHFVIGVIQAYWGAVFTFDL). At 540 to 587 (STSFLWVVYGSVQYHVRSLDYYLIDYMCDVAVEYHDSARHSWSEKECY) the chain is on the extracellular side.

This sequence belongs to the insect chemoreceptor superfamily. Gustatory receptor (GR) family. Gr22e subfamily.

The protein resides in the cell membrane. Its function is as follows. Probable gustatory receptor which mediates acceptance or avoidance behavior, depending on its substrates. The polypeptide is Putative gustatory receptor 59b (Drosophila erecta (Fruit fly)).